Consider the following 378-residue polypeptide: Ribosomal RNA large subunit methyltransferase G (378 aa).

It belongs to the methyltransferase superfamily. RlmG family.

Its subcellular location is the cytoplasm. The catalysed reaction is guanosine(1835) in 23S rRNA + S-adenosyl-L-methionine = N(2)-methylguanosine(1835) in 23S rRNA + S-adenosyl-L-homocysteine + H(+). Specifically methylates the guanine in position 1835 (m2G1835) of 23S rRNA. The polypeptide is Ribosomal RNA large subunit methyltransferase G (Shewanella baltica (strain OS155 / ATCC BAA-1091)).